We begin with the raw amino-acid sequence, 406 residues long: Argininosuccinate synthase (406 aa).

ATP contacts are provided by residues 11–19 (AYSGGLDTS) and alanine 38. L-citrulline contacts are provided by tyrosine 91 and serine 96. An ATP-binding site is contributed by glycine 121. Residues threonine 123, asparagine 127, and aspartate 128 each coordinate L-aspartate. Asparagine 127 contacts L-citrulline. Residues arginine 131, serine 181, serine 190, glutamate 266, and tyrosine 278 each contribute to the L-citrulline site.

This sequence belongs to the argininosuccinate synthase family. Type 1 subfamily. As to quaternary structure, homotetramer.

Its subcellular location is the cytoplasm. It catalyses the reaction L-citrulline + L-aspartate + ATP = 2-(N(omega)-L-arginino)succinate + AMP + diphosphate + H(+). The protein operates within amino-acid biosynthesis; L-arginine biosynthesis; L-arginine from L-ornithine and carbamoyl phosphate: step 2/3. The protein is Argininosuccinate synthase of Campylobacter jejuni (strain RM1221).